The following is a 983-amino-acid chain: GPI ethanolamine phosphate transferase 2, catalytic subunit (983 aa).

Residues 1 to 431 (MRLGSGTFAT…SLSAQVAQYD (431 aa)) are Lumenal-facing. N-linked (GlcNAc...) asparagine glycosylation is present at Asn194. 12 helical membrane passes run 432-452 (IYSM…LLLS), 471-491 (GFSL…VIVC), 506-526 (LAAG…VSVL), 552-572 (LLIL…SFVE), 699-719 (VLAA…CSPV), 721-741 (KAAL…IGSV), 752-772 (ISKG…ILFT), 789-809 (LKTV…ALLF), 812-832 (HNLP…KFIW), 879-899 (VEIP…VLWA), 919-939 (ACFC…VLVT), and 955-975 (LLYE…FTAM).

The protein belongs to the PIGG/PIGN/PIGO family. PIGG subfamily. Part of the ethanolamine phosphate transferase 2 complex composed by PIGG and PIGF. PIGF is required to stabilize it. Competes with PIGO for the binding of PIGF.

The protein localises to the endoplasmic reticulum membrane. It participates in glycolipid biosynthesis; glycosylphosphatidylinositol-anchor biosynthesis. Catalytic subunit of the ethanolamine phosphate transferase 2 complex that transfers an ethanolamine phosphate (EtNP) from a phosphatidylethanolamine (PE) to the 6-OH position of the second alpha-1,6-linked mannose of a 6-PEtn-alpha-D-Man-(1-&gt;2)-alpha-D-Man-(1-&gt;6)-2-PEtn-alpha-D-Man-(1-&gt;4)-alpha-D-GlcN-(1-&gt;6)-(1-radyl,2-acyl-sn-glycero-3-phospho)-2-acyl-inositol (also termed H7) intermediate to generate a 6-PEtn-alpha-D-Man-(1-&gt;2)-6-PEtn-alpha-D-Man-(1-&gt;6)-2-PEtn-alpha-D-Man-(1-&gt;4)-alpha-D-GlcN-(1-&gt;6)-(1-radyl,2-acyl-sn-glycero-3-phospho)-2-acyl-inositol (also termed H8) and participates in the eleventh step of the glycosylphosphatidylinositol-anchor biosynthesis. This chain is GPI ethanolamine phosphate transferase 2, catalytic subunit, found in Homo sapiens (Human).